The primary structure comprises 1465 residues: DNA polymerase III PolC-type (1465 aa).

Residues 427 to 583 (YVVFDVETTG…YDAEATGRLL (157 aa)) form the Exonuclease domain.

The protein belongs to the DNA polymerase type-C family. PolC subfamily.

It localises to the cytoplasm. It catalyses the reaction DNA(n) + a 2'-deoxyribonucleoside 5'-triphosphate = DNA(n+1) + diphosphate. Functionally, required for replicative DNA synthesis. This DNA polymerase also exhibits 3' to 5' exonuclease activity. The polypeptide is DNA polymerase III PolC-type (Streptococcus pyogenes serotype M2 (strain MGAS10270)).